The primary structure comprises 540 residues: Transcription termination/antitermination protein NusA (540 aa).

The 71-residue stretch at 144–214 (GQVIEARVED…SMWPITLSRS (71 aa)) folds into the S1 motif domain. Residues 319–386 (DTSIEIVVPA…QGIFGIKKRR (68 aa)) form the KH domain. Residues 457-540 (VAAPTPTPAP…KQTFDNFDDL (84 aa)) form a disordered region. Pro residues predominate over residues 461-489 (TPTPAPQPTPAPTKVEPVPPPVSVTPKPI). Positions 512–522 (DDSKTKPEKSS) are enriched in basic and acidic residues. Over residues 523–540 (AKTNTPQTKQTFDNFDDL) the composition is skewed to polar residues.

It belongs to the NusA family. In terms of assembly, monomer. Binds directly to the core enzyme of the DNA-dependent RNA polymerase and to nascent RNA.

The protein localises to the cytoplasm. Its function is as follows. Participates in both transcription termination and antitermination. This Mycoplasma pneumoniae (strain ATCC 29342 / M129 / Subtype 1) (Mycoplasmoides pneumoniae) protein is Transcription termination/antitermination protein NusA.